The following is a 237-amino-acid chain: uncharacterized protein (237 aa).

A helical transmembrane segment spans residues 53 to 70 (LIFLATVLAGLILFYFGV). The disordered stretch occupies residues 85 to 155 (PPIVIKPVAP…TQEKKDVKVA (71 aa)). The stretch at 98 to 157 (KTQESNQTTKKEVKQEEQKKEEPKKMVQKQETQEKREVKKSEKNEVKQTQEKKDVKVAKK) forms a coiled coil. 2 stretches are compositionally biased toward basic and acidic residues: residues 106-122 (TKKE…EPKK) and 128-155 (ETQE…VKVA). In terms of domain architecture, SPOR spans 165–237 (AANLRTYKFQ…HFKDAIFVRK (73 aa)).

It is found in the membrane. This is an uncharacterized protein from Aquifex aeolicus (strain VF5).